Consider the following 559-residue polypeptide: Dihydroxy-acid dehydratase (559 aa).

Cysteine 49 is a [2Fe-2S] cluster binding site. Aspartate 81 is a binding site for Mg(2+). A [2Fe-2S] cluster-binding site is contributed by cysteine 122. Aspartate 123 and lysine 124 together coordinate Mg(2+). At lysine 124 the chain carries N6-carboxylysine. Residue cysteine 194 participates in [2Fe-2S] cluster binding. Glutamate 446 provides a ligand contact to Mg(2+). Serine 472 functions as the Proton acceptor in the catalytic mechanism.

This sequence belongs to the IlvD/Edd family. As to quaternary structure, homodimer. Requires [2Fe-2S] cluster as cofactor. The cofactor is Mg(2+).

The catalysed reaction is (2R)-2,3-dihydroxy-3-methylbutanoate = 3-methyl-2-oxobutanoate + H2O. It carries out the reaction (2R,3R)-2,3-dihydroxy-3-methylpentanoate = (S)-3-methyl-2-oxopentanoate + H2O. The protein operates within amino-acid biosynthesis; L-isoleucine biosynthesis; L-isoleucine from 2-oxobutanoate: step 3/4. It functions in the pathway amino-acid biosynthesis; L-valine biosynthesis; L-valine from pyruvate: step 3/4. Functions in the biosynthesis of branched-chain amino acids. Catalyzes the dehydration of (2R,3R)-2,3-dihydroxy-3-methylpentanoate (2,3-dihydroxy-3-methylvalerate) into 2-oxo-3-methylpentanoate (2-oxo-3-methylvalerate) and of (2R)-2,3-dihydroxy-3-methylbutanoate (2,3-dihydroxyisovalerate) into 2-oxo-3-methylbutanoate (2-oxoisovalerate), the penultimate precursor to L-isoleucine and L-valine, respectively. The chain is Dihydroxy-acid dehydratase from Prochlorococcus marinus (strain MIT 9515).